We begin with the raw amino-acid sequence, 1529 residues long: Slit homolog 2 protein (1529 aa).

Positions 1–30 are cleaved as a signal peptide; it reads MRGVGWQMLSLSLGLVLAILNKVAPQACPA. An LRRNT domain is found at 31–55; sequence QCSCSGSTVDCHGLALRSVPRNIPR. LRR repeat units lie at residues 56–77, 80–101, 104–125, 128–149, 152–173, and 176–197; these read NTER…DFAG, HLRV…AFQD, ELER…LFLG, KLYR…AFRG, DIKN…AFRA, and DLEV…SFNH. Asparagine 66 carries N-linked (GlcNAc...) asparagine glycosylation. N-linked (GlcNAc...) asparagine glycosylation occurs at asparagine 186. The region spanning 209–259 is the LRRCT 1 domain; it reads NNLYCDCHLAWLSDWLRQRPRVGLYTQCMGPSHLRGHNVAEVQKREFVCSG. The region spanning 264–300 is the LRRNT 2 domain; the sequence is MAPSCSVLHCPAACTCSNNIVDCRGKGLTEIPTNLPE. A disulfide bridge connects residues cysteine 277 and cysteine 286. 5 LRR repeats span residues 301–322, 325–346, 349–370, 373–394, and 397–418; these read TITE…AFSP, KLRR…AFQG, SLNS…LFEG, SLQL…AFQD, and NLNL…TFSP. The region spanning 430 to 480 is the LRRCT 2 domain; that stretch reads NPFICDCHLKWLADYLHTNPIETSGARCTSPRRLANKRIGQIKSKKFRCSA. 4 disulfide bridges follow: cysteine 434-cysteine 457, cysteine 436-cysteine 478, cysteine 506-cysteine 512, and cysteine 510-cysteine 519. One can recognise an LRRNT 3 domain in the interval 497–533; sequence SGDCFADLACPEKCRCEGTTVDCSNQKLNKIPEHIPQ. LRR repeat units lie at residues 534-555, 559-580, 583-604, 607-628, and 631-652; these read YTAE…GIFK, QLRK…AFEG, GVNE…MFKG, SLKT…SFIG, and SVRL…AFDT. Asparagine 564 carries an N-linked (GlcNAc...) asparagine glycan. N-linked (GlcNAc...) asparagine glycosylation occurs at asparagine 623. The LRRCT 3 domain maps to 664 to 714; the sequence is NPFNCNCYLAWLGEWLRKKRIVTGNPRCQKPYFLKEIPIQDVAIQDFTCDD. Cystine bridges form between cysteine 668–cysteine 691, cysteine 670–cysteine 712, cysteine 727–cysteine 733, and cysteine 731–cysteine 740. Residues 718-754 form the LRRNT 4 domain; it reads DNSCSPLSRCPTECTCLDTVVRCSNKGLKVLPKGIPR. LRR repeat units lie at residues 755–777, 778–799, 802–823, and 826–847; these read DVTE…SNYK, HLTL…SFSN, QLLT…TFDG, and SLRL…AFND. N-linked (GlcNAc...) asparagine glycans are attached at residues asparagine 794 and asparagine 799. An LRRCT 4 domain is found at 859-909; sequence NPLYCDCNMQWLSDWVKSEYKEPGIARCAGPGEMADKLLLTTPSKKFTCQG. 20 disulfides stabilise this stretch: cysteine 863/cysteine 886, cysteine 865/cysteine 907, cysteine 922/cysteine 933, cysteine 927/cysteine 943, cysteine 945/cysteine 954, cysteine 961/cysteine 972, cysteine 966/cysteine 984, cysteine 986/cysteine 995, cysteine 1002/cysteine 1013, cysteine 1007/cysteine 1022, cysteine 1024/cysteine 1033, cysteine 1040/cysteine 1053, cysteine 1047/cysteine 1062, cysteine 1064/cysteine 1073, cysteine 1080/cysteine 1091, cysteine 1085/cysteine 1100, cysteine 1102/cysteine 1111, cysteine 1125/cysteine 1136, cysteine 1130/cysteine 1145, and cysteine 1147/cysteine 1156. EGF-like domains follow at residues 918-955 and 957-996; these read KCNP…QDCD and PIHA…ENCE. The region spanning 998 to 1034 is the EGF-like 3; calcium-binding domain; that stretch reads NVDDCEDNDCENNSTCVDGINNYTCLCPPEYTGELCE. Residues asparagine 1009, asparagine 1010, and asparagine 1019 are each glycosylated (N-linked (GlcNAc...) asparagine). Residues 1036-1074 form the EGF-like 4 domain; that stretch reads KLDFCAQDLNPCQHDSKCILTPKGFKCDCTPGYVGEHCD. The region spanning 1076-1112 is the EGF-like 5; calcium-binding domain; sequence DFDDCQDNKCKNGAHCTDAVNGYTCICPEGYSGLFCE. Residues 1121–1157 enclose the EGF-like 6 domain; it reads RTSPCDNFDCQNGAQCIVRINEPICQCLPGYQGEKCE. The Laminin G-like domain occupies 1160–1333; it reads VSVNFINKES…PMQTGILPGC (174 aa). N-linked (GlcNAc...) asparagine glycans are attached at residues asparagine 1183, asparagine 1266, and asparagine 1300. Cystine bridges form between cysteine 1307–cysteine 1333, cysteine 1336–cysteine 1346, cysteine 1341–cysteine 1356, cysteine 1358–cysteine 1367, cysteine 1375–cysteine 1385, cysteine 1380–cysteine 1395, cysteine 1397–cysteine 1406, cysteine 1416–cysteine 1426, cysteine 1421–cysteine 1436, cysteine 1438–cysteine 1447, cysteine 1453–cysteine 1492, cysteine 1471–cysteine 1506, cysteine 1482–cysteine 1522, and cysteine 1486–cysteine 1524. One can recognise an EGF-like 7 domain in the interval 1332–1368; the sequence is GCEPCHKKVCAHGTCQPSSQAGFTCECQEGWMGPLCD. Positions 1453 to 1528 constitute a CTCK domain; the sequence is CRGERIRDYY…VVKCGCTRCV (76 aa).

As to quaternary structure, interacts with GREM1. Homodimer. Binds ROBO1 and ROBO2 with high affinity. In terms of tissue distribution, fetal lung and kidney, and adult spinal cord. Weak expression in adult adrenal gland, thyroid, trachea and other tissues examined.

It localises to the secreted. Functionally, thought to act as molecular guidance cue in cellular migration, and function appears to be mediated by interaction with roundabout homolog receptors. During neural development involved in axonal navigation at the ventral midline of the neural tube and projection of axons to different regions. SLIT1 and SLIT2 seem to be essential for midline guidance in the forebrain by acting as repulsive signal preventing inappropriate midline crossing by axons projecting from the olfactory bulb. In spinal cord development may play a role in guiding commissural axons once they reached the floor plate by modulating the response to netrin. In vitro, silences the attractive effect of NTN1 but not its growth-stimulatory effect and silencing requires the formation of a ROBO1-DCC complex. May be implicated in spinal cord midline post-crossing axon repulsion. In vitro, only commissural axons that crossed the midline responded to SLIT2. In the developing visual system appears to function as repellent for retinal ganglion axons by providing a repulsion that directs these axons along their appropriate paths prior to, and after passage through, the optic chiasm. In vitro, collapses and repels retinal ganglion cell growth cones. Seems to play a role in branching and arborization of CNS sensory axons, and in neuronal cell migration. In vitro, Slit homolog 2 protein N-product, but not Slit homolog 2 protein C-product, repels olfactory bulb (OB) but not dorsal root ganglia (DRG) axons, induces OB growth cones collapse and induces branching of DRG axons. Seems to be involved in regulating leukocyte migration. The chain is Slit homolog 2 protein (SLIT2) from Homo sapiens (Human).